Here is a 57-residue protein sequence, read N- to C-terminus: Large ribosomal subunit protein bL32 (57 aa).

The protein belongs to the bacterial ribosomal protein bL32 family.

In Lysinibacillus sphaericus (strain C3-41), this protein is Large ribosomal subunit protein bL32.